The sequence spans 1741 residues: S-layer protein (1741 aa).

Polar residues predominate over residues 894-904; that stretch reads SFTSDSANGSG. The segment at 894–913 is disordered; that stretch reads SFTSDSANGSGHSVEGGTGD.

In terms of processing, glycosylated.

The protein resides in the secreted. The protein localises to the cell wall. It localises to the S-layer. Its function is as follows. S-layer protein. The S-layer is a paracrystalline mono-layered assembly of proteins which coats the surface of bacteria. Under laboratory conditions, has a supportive but not a critical role in the function of the cyanobacterium. Shows no apparent hemolytic activity against sheep erythrocytes, however, a slight hemolytic activity is detected during the conformational change caused by the rebinding of Ca(2+). This is S-layer protein from Synechocystis sp. (strain ATCC 27184 / PCC 6803 / Kazusa).